The chain runs to 250 residues: L-ascorbate peroxidase 1, cytosolic (250 aa).

Histidine 42 acts as the Proton acceptor in catalysis. The disordered stretch occupies residues 113–137 (VPFHPGREDKPAPPPEGRLPDATKG). Residue histidine 163 coordinates heme b. The K(+) site is built by threonine 164, threonine 180, asparagine 182, and aspartate 187.

This sequence belongs to the peroxidase family. Ascorbate peroxidase subfamily. Heme b serves as cofactor. As to expression, expressed in roots, aerial vegetative parts and reproductive organs. Expressed in roots, leaves, stems and flowers.

It localises to the cytoplasm. It catalyses the reaction L-ascorbate + H2O2 = L-dehydroascorbate + 2 H2O. With respect to regulation, inhibited by p-chloromercuriphenylsulfonic acid (CMPSA). Its function is as follows. Plays a key role in hydrogen peroxide removal. This is L-ascorbate peroxidase 1, cytosolic from Oryza sativa subsp. japonica (Rice).